The chain runs to 102 residues: YcgL domain-containing protein MS1047 (102 aa).

Residues 1–85 (MLCAIYKSKK…KQESLFEQFK (85 aa)) form the YcgL domain.

In Mannheimia succiniciproducens (strain KCTC 0769BP / MBEL55E), this protein is YcgL domain-containing protein MS1047.